The primary structure comprises 203 residues: Holliday junction branch migration complex subunit RuvA (203 aa).

A domain I region spans residues Met1–Asn64. The tract at residues Asn65–Pro142 is domain II. The flexible linker stretch occupies residues Ala143–Pro154. The interval Ala155–Leu203 is domain III.

This sequence belongs to the RuvA family. As to quaternary structure, homotetramer. Forms an RuvA(8)-RuvB(12)-Holliday junction (HJ) complex. HJ DNA is sandwiched between 2 RuvA tetramers; dsDNA enters through RuvA and exits via RuvB. An RuvB hexamer assembles on each DNA strand where it exits the tetramer. Each RuvB hexamer is contacted by two RuvA subunits (via domain III) on 2 adjacent RuvB subunits; this complex drives branch migration. In the full resolvosome a probable DNA-RuvA(4)-RuvB(12)-RuvC(2) complex forms which resolves the HJ.

The protein localises to the cytoplasm. The RuvA-RuvB-RuvC complex processes Holliday junction (HJ) DNA during genetic recombination and DNA repair, while the RuvA-RuvB complex plays an important role in the rescue of blocked DNA replication forks via replication fork reversal (RFR). RuvA specifically binds to HJ cruciform DNA, conferring on it an open structure. The RuvB hexamer acts as an ATP-dependent pump, pulling dsDNA into and through the RuvAB complex. HJ branch migration allows RuvC to scan DNA until it finds its consensus sequence, where it cleaves and resolves the cruciform DNA. In Shigella boydii serotype 18 (strain CDC 3083-94 / BS512), this protein is Holliday junction branch migration complex subunit RuvA.